Here is a 160-residue protein sequence, read N- to C-terminus: Protein MGF 300-2R (160 aa).

This sequence belongs to the asfivirus MGF 300 family.

Plays a role in virus cell tropism, and may be required for efficient virus replication in macrophages. The chain is Protein MGF 300-2R from African swine fever virus (isolate Tick/Malawi/Lil 20-1/1983) (ASFV).